The chain runs to 1217 residues: ATP-dependent RNA helicase DHX30 (1217 aa).

Phosphoserine is present on residues aspartate 15 and serine 29. The region spanning 76-144 (PKNLLNSVIG…QAAAAACQLF (69 aa)) is the DRBM domain. Positions 176-223 (WWRPEPTMPPTSWRQLNPENIRPGGPAGLSRSLGREEEEDEEEELEEG) are disordered. A compositionally biased stretch (acidic residues) spans 211–223 (EEEEDEEEELEEG). Phosphoserine occurs at positions 249 and 403. The Helicase ATP-binding domain maps to 467–635 (LSAIEQHPVV…FGGCPVIKVP (169 aa)). Position 480–487 (480–487 (GDTGCGKT)) interacts with ATP. A DEAH box motif is present at residues 582 to 585 (DEVH). The Helicase C-terminal domain maps to 677 to 850 (LVTDLVLHID…NLVLQAKIHM (174 aa)).

Belongs to the DEAD box helicase family. DEAH subfamily. Identified in a complex with TFAM and SSBP1. Interacts (via N-terminus) with ZC3HAV1 (via N-terminal domain) in an RNA-independent manner. Found in a complex with GRSF1, DDX28, FASTKD2 and FASTKD5. Post-translationally, phosphorylated on Ser-15. Expressed in the heart, brain, spleen, lung, liver, skeletal muscle, kidney, and testis. Expression is strongest in the testis and brain, while the lowest levels of expression are found in the spleen and lung.

Its subcellular location is the cytoplasm. It localises to the mitochondrion. It is found in the mitochondrion matrix. The protein resides in the mitochondrion nucleoid. The catalysed reaction is ATP + H2O = ADP + phosphate + H(+). In terms of biological role, RNA-dependent helicase. Plays an important role in the assembly of the mitochondrial large ribosomal subunit. Required for optimal function of the zinc-finger antiviral protein ZC3HAV1. Associates with mitochondrial DNA. Involved in nervous system development and differentiation through its involvement in the up-regulation of a number of genes which are required for neurogenesis, including GSC, NCAM1, neurogenin, and NEUROD. The polypeptide is ATP-dependent RNA helicase DHX30 (Dhx30) (Mus musculus (Mouse)).